The following is a 286-amino-acid chain: DegV domain-containing protein M6_Spy1658 (286 aa).

A DegV domain is found at 3–282 (FTIMTDSTAD…PNTLAVFVIG (280 aa)). Hexadecanoate contacts are provided by threonine 62 and serine 94.

May bind long-chain fatty acids, such as palmitate, and may play a role in lipid transport or fatty acid metabolism. In Streptococcus pyogenes serotype M6 (strain ATCC BAA-946 / MGAS10394), this protein is DegV domain-containing protein M6_Spy1658.